A 207-amino-acid polypeptide reads, in one-letter code: LexA repressor (207 aa).

The segment at residues 28-48 (RAEISRELGFKSANAAEEHLK) is a DNA-binding region (H-T-H motif). Catalysis depends on for autocatalytic cleavage activity residues serine 123 and lysine 160.

It belongs to the peptidase S24 family. Homodimer.

It carries out the reaction Hydrolysis of Ala-|-Gly bond in repressor LexA.. Functionally, represses a number of genes involved in the response to DNA damage (SOS response), including recA and lexA. In the presence of single-stranded DNA, RecA interacts with LexA causing an autocatalytic cleavage which disrupts the DNA-binding part of LexA, leading to derepression of the SOS regulon and eventually DNA repair. The chain is LexA repressor from Haemophilus influenzae (strain 86-028NP).